Reading from the N-terminus, the 402-residue chain is S-adenosylmethionine synthase (402 aa).

His-16 contacts ATP. Asp-18 serves as a coordination point for Mg(2+). Glu-44 is a binding site for K(+). L-methionine is bound by residues Glu-57 and Gln-103. The segment at 103–113 (QSPDIAQGVDT) is flexible loop. Residues 178–180 (DGK), 249–250 (KF), Asp-258, 264–265 (RK), Ala-281, and Lys-285 each bind ATP. Position 258 (Asp-258) interacts with L-methionine. Lys-289 contributes to the L-methionine binding site.

This sequence belongs to the AdoMet synthase family. In terms of assembly, homotetramer; dimer of dimers. Mg(2+) is required as a cofactor. K(+) serves as cofactor.

The protein localises to the cytoplasm. The enzyme catalyses L-methionine + ATP + H2O = S-adenosyl-L-methionine + phosphate + diphosphate. It functions in the pathway amino-acid biosynthesis; S-adenosyl-L-methionine biosynthesis; S-adenosyl-L-methionine from L-methionine: step 1/1. Catalyzes the formation of S-adenosylmethionine (AdoMet) from methionine and ATP. The overall synthetic reaction is composed of two sequential steps, AdoMet formation and the subsequent tripolyphosphate hydrolysis which occurs prior to release of AdoMet from the enzyme. The chain is S-adenosylmethionine synthase from Mycobacterium sp. (strain JLS).